Reading from the N-terminus, the 423-residue chain is Glucose-6-phosphate isomerase (423 aa).

The active-site Proton donor is glutamate 279. Active-site residues include histidine 300 and lysine 413.

It belongs to the GPI family.

It localises to the cytoplasm. It carries out the reaction alpha-D-glucose 6-phosphate = beta-D-fructose 6-phosphate. Its pathway is carbohydrate biosynthesis; gluconeogenesis. It participates in carbohydrate degradation; glycolysis; D-glyceraldehyde 3-phosphate and glycerone phosphate from D-glucose: step 2/4. Catalyzes the reversible isomerization of glucose-6-phosphate to fructose-6-phosphate. This is Glucose-6-phosphate isomerase from Acholeplasma laidlawii (strain PG-8A).